We begin with the raw amino-acid sequence, 371 residues long: Solute carrier family 35 member F6 (371 aa).

The N-terminal stretch at 1-25 is a signal peptide; that stretch reads MAWTKHQLFLAGLMLVTGSINTLSA. The next 2 membrane-spanning stretches (helical) occupy residues 48–68 and 89–109; these read FLQA…FYLL and LLFL…YVAL. In terms of domain architecture, EamA spans 104–160; that stretch reads LMYVALNMTSASSFQMLRGAVIIFTGLFSVAFLGRRLVLSQWLGILATIAGLVVVGL. The N-linked (GlcNAc...) asparagine glycan is linked to asparagine 110. 7 consecutive transmembrane segments (helical) span residues 117 to 137, 140 to 160, 176 to 196, 216 to 236, 261 to 281, 295 to 312, and 317 to 336; these read FQML…AFLG, LVLS…VVGL, VITG…QMVL, GLFG…IPAG, LIAV…FAGI, LDSL…ALGW, and ALQI…YNGL. The disordered stretch occupies residues 347–371; sequence GRPPAEESEQERLLGGSRTPINDAS. The residue at position 365 (threonine 365) is a Phosphothreonine.

The protein belongs to the SLC35F solute transporter family. Interacts with SLC25A5.

It localises to the mitochondrion. It is found in the lysosome membrane. Involved in the maintenance of mitochondrial membrane potential in pancreatic ductal adenocarcinoma (PDAC) cells. Promotes pancreatic ductal adenocarcinoma (PDAC) cell growth. May play a role as a nucleotide-sugar transporter. The chain is Solute carrier family 35 member F6 (SLC35F6) from Pongo abelii (Sumatran orangutan).